We begin with the raw amino-acid sequence, 43 residues long: Potassium channel toxin gamma-KTx 4.1 (43 aa).

Cystine bridges form between Cys5/Cys23, Cys11/Cys34, Cys20/Cys39, and Cys24/Cys41.

Belongs to the ergtoxin family. Gamma-KTx 4 subfamily. Expressed by the venom gland.

Its subcellular location is the secreted. Its function is as follows. Reversibly blocks Kv11/ERG potassium channels. This chain is Potassium channel toxin gamma-KTx 4.1, found in Centruroides limpidus (Mexican scorpion).